A 67-amino-acid polypeptide reads, in one-letter code: Large ribosomal subunit protein bL35 (67 aa).

This sequence belongs to the bacterial ribosomal protein bL35 family.

This chain is Large ribosomal subunit protein bL35, found in Caldanaerobacter subterraneus subsp. tengcongensis (strain DSM 15242 / JCM 11007 / NBRC 100824 / MB4) (Thermoanaerobacter tengcongensis).